A 151-amino-acid polypeptide reads, in one-letter code: Large ribosomal subunit protein bL9 (151 aa).

It belongs to the bacterial ribosomal protein bL9 family.

Functionally, binds to the 23S rRNA. This Azoarcus sp. (strain BH72) protein is Large ribosomal subunit protein bL9.